A 406-amino-acid polypeptide reads, in one-letter code: Eukaryotic initiation factor 4A-I (406 aa).

Residues 1–21 are disordered; it reads MSASQDSRSRDNGPDGMEPEG. Serine 2 is modified (N-acetylserine). Serine 4 carries the post-translational modification Phosphoserine. Residues 32 to 60 carry the Q motif motif; sequence DSLDDMNLSESLLRGIYAYGFEKPSAIQQ. The 172-residue stretch at 63-234 folds into the Helicase ATP-binding domain; sequence ILSCIKGYDV…KKFMRDPIRI (172 aa). An ATP-binding site is contributed by 76–83; sequence AQSGTGKT. An N6-acetyllysine modification is found at lysine 118. Lysine 146 is covalently cross-linked (Glycyl lysine isopeptide (Lys-Gly) (interchain with G-Cter in SUMO2)). The residue at position 158 (threonine 158) is a Phosphothreonine. At lysine 174 the chain carries N6-acetyllysine. The DEAD box motif lies at 182-185; sequence DEAD. Lysine 193 carries the N6-acetyllysine modification. Lysine 225 participates in a covalent cross-link: Glycyl lysine isopeptide (Lys-Gly) (interchain with G-Cter in SUMO2). Lysine 238 bears the N6-acetyllysine; alternate mark. A Glycyl lysine isopeptide (Lys-Gly) (interchain with G-Cter in SUMO2); alternate cross-link involves residue lysine 238. Residues 245-406 enclose the Helicase C-terminal domain; it reads GIRQFYINVE…EMPLNVADLI (162 aa). Glycyl lysine isopeptide (Lys-Gly) (interchain with G-Cter in SUMO2) cross-links involve residues lysine 309, lysine 369, and lysine 381.

This sequence belongs to the DEAD box helicase family. eIF4A subfamily. In terms of assembly, eIF4F is a multi-subunit complex, the composition of which varies with external and internal environmental conditions. It is composed of at least EIF4A, EIF4E and EIF4G1/EIF4G3. Interacts with PAIP1, EIF4E and UPF2. Found in a complex with XPO7, EIF4A1, ARHGAP1, VPS26A, VPS29, VPS35 and SFN. May interact with NOM1. Interacts with PDCD4; this interferes with the interaction between EIF4A and EIF4G. Interacts with RBM4. Interacts with DDX3X in an RNA-independent manner. Interacts with PKP1 (via N-terminus); the interaction promotes EIF4A1 recruitment to the cap-dependent translation complex and EIF4A1 ATPase activity.

It is found in the cytoplasm. Its subcellular location is the perinuclear region. The protein resides in the cell membrane. The protein localises to the stress granule. The catalysed reaction is ATP + H2O = ADP + phosphate + H(+). In terms of biological role, ATP-dependent RNA helicase which is a subunit of the eIF4F complex involved in cap recognition and is required for mRNA binding to ribosome. In the current model of translation initiation, eIF4A unwinds RNA secondary structures in the 5'-UTR of mRNAs which is necessary to allow efficient binding of the small ribosomal subunit, and subsequent scanning for the initiator codon. As a result, promotes cell proliferation and growth. The chain is Eukaryotic initiation factor 4A-I (EIF4A1) from Pongo abelii (Sumatran orangutan).